The primary structure comprises 630 residues: tRNA uridine 5-carboxymethylaminomethyl modification enzyme MnmG (630 aa).

FAD is bound at residue 13-18 (GGGHAG). An NAD(+)-binding site is contributed by 273-287 (GPRYCPSIEDKVMRF).

This sequence belongs to the MnmG family. As to quaternary structure, homodimer. Heterotetramer of two MnmE and two MnmG subunits. FAD is required as a cofactor.

It localises to the cytoplasm. Its function is as follows. NAD-binding protein involved in the addition of a carboxymethylaminomethyl (cmnm) group at the wobble position (U34) of certain tRNAs, forming tRNA-cmnm(5)s(2)U34. In Actinobacillus pleuropneumoniae serotype 7 (strain AP76), this protein is tRNA uridine 5-carboxymethylaminomethyl modification enzyme MnmG.